We begin with the raw amino-acid sequence, 540 residues long: Chaperonin GroEL 2 (540 aa).

Residues 29-32, lysine 50, 86-90, glycine 414, and aspartate 496 each bind ATP; these read TMGP and DGTTT.

The protein belongs to the chaperonin (HSP60) family. In terms of assembly, forms a cylinder of 14 subunits composed of two heptameric rings stacked back-to-back. Interacts with the co-chaperonin GroES.

Its subcellular location is the cytoplasm. The enzyme catalyses ATP + H2O + a folded polypeptide = ADP + phosphate + an unfolded polypeptide.. In terms of biological role, together with its co-chaperonin GroES, plays an essential role in assisting protein folding. The GroEL-GroES system forms a nano-cage that allows encapsulation of the non-native substrate proteins and provides a physical environment optimized to promote and accelerate protein folding. In Rhodopirellula baltica (strain DSM 10527 / NCIMB 13988 / SH1), this protein is Chaperonin GroEL 2.